A 138-amino-acid polypeptide reads, in one-letter code: Cysteine desulfuration protein SufE (138 aa).

The active-site Cysteine persulfide intermediate is Cys51.

Belongs to the SufE family. Homodimer. Interacts with SufS.

It localises to the cytoplasm. The protein operates within cofactor biosynthesis; iron-sulfur cluster biosynthesis. Its function is as follows. Participates in cysteine desulfuration mediated by SufS. Cysteine desulfuration mobilizes sulfur from L-cysteine to yield L-alanine and constitutes an essential step in sulfur metabolism for biosynthesis of a variety of sulfur-containing biomolecules. Functions as a sulfur acceptor for SufS, by mediating the direct transfer of the sulfur atom from the S-sulfanylcysteine of SufS, an intermediate product of cysteine desulfuration process. The sequence is that of Cysteine desulfuration protein SufE from Salmonella choleraesuis (strain SC-B67).